The primary structure comprises 398 residues: Phosphoglycerate kinase (398 aa).

Substrate contacts are provided by residues 21–23 (DFN), Arg36, 59–62 (HLGR), Arg119, and Arg157. Residues Lys208, Gly296, Glu327, and 354–357 (GGDS) contribute to the ATP site.

This sequence belongs to the phosphoglycerate kinase family. In terms of assembly, monomer.

It is found in the cytoplasm. The catalysed reaction is (2R)-3-phosphoglycerate + ATP = (2R)-3-phospho-glyceroyl phosphate + ADP. Its pathway is carbohydrate degradation; glycolysis; pyruvate from D-glyceraldehyde 3-phosphate: step 2/5. This Streptococcus pneumoniae serotype 19F (strain G54) protein is Phosphoglycerate kinase.